The sequence spans 953 residues: MAENAESAERFWGQFHGQNTGYLEQQFELYKEDPELVESSIRTIFDTHGAPSWLSSTENVKSVSNASDFDVTKLTSAIRLVEAIRRYGHTDADIYPVGGYKGDRSKMLDLSTYNLKEQDLEKIPASWIWEKQAPGVATALDVVNQLKKYYTGTITFEYDHVNNDEERKWLFDLIEEGNARLDPSDDERKKILQRLADVEGFEKFLHKTFVGQKRFSIEGLESMVPMIDHIVQYSNQDSIEHVMMGMAHRGRLSVLANVLGKPYDKIFSEFNYTKEKELMPSEGSRAINYGWTGDVKYHYGAEKEVEFGNKGQTRITLAHNPSHLEFVNPVVEGFTRAAQDDRSEKGYPKQVTNKAVSVLIHGDAAFIGEGVVAETLNLSGLPGYSTGGTLHIIANNLLGYTTDREDGRSTRYASDLAKGFEIPVIRVNADDPISCISAIKIAYEYRQKFQKDFLIDLVGYRRYGHNEMDEPRTTQPSLYQQIDDHPSVASLFGKGMEEKGILQEGGFEEVKSAVEKKLTDIYKGMTESEIGEPEAKLMPQVLTNGLDQFTTAIDLATLKSINEELLERPEGFKGFKKTERILQRRKDALEEGNKADWGTGEALAFASILKEGTPIRLTGQDTERGTFAHRHIVLHDVETGEKYSPLHGLSDVEASFDVRNSPLSEAGVLGFEYGYSVQSPDTLVIWEAQFGDFANAGQVIFDQFISSARAKWGEKSNMVLLLPHGYEGQGPEHSSARLERFLQMAAENNWIVANVTSSAQLFHILRRQAAMRDRDEARPLVLMTPKSSLIRHPRMGATAEEFTDGGFLALRDQPGFEANREKVTRLVVGSGKMMIDIEEAMDDSDETYDWLQIKRVEQIYPFPKKALEEEIKQLPNLKEIVWVQEEPKNMGAWNFVDDYLRELLNEDQKLKVISRPDRSAPAGGIPTVHKTAQNKIIKQALNQSEGGKSSAGN.

Belongs to the alpha-ketoglutarate dehydrogenase family. In terms of assembly, homodimer. Part of the 2-oxoglutarate dehydrogenase (OGDH) complex composed of E1 (2-oxoglutarate dehydrogenase), E2 (dihydrolipoamide succinyltransferase) and E3 (dihydrolipoamide dehydrogenase); the complex contains multiple copies of the three enzymatic components (E1, E2 and E3). The cofactor is thiamine diphosphate.

The enzyme catalyses N(6)-[(R)-lipoyl]-L-lysyl-[protein] + 2-oxoglutarate + H(+) = N(6)-[(R)-S(8)-succinyldihydrolipoyl]-L-lysyl-[protein] + CO2. In terms of biological role, E1 component of the 2-oxoglutarate dehydrogenase (OGDH) complex which catalyzes the decarboxylation of 2-oxoglutarate, the first step in the conversion of 2-oxoglutarate to succinyl-CoA and CO(2). This Oceanobacillus iheyensis (strain DSM 14371 / CIP 107618 / JCM 11309 / KCTC 3954 / HTE831) protein is 2-oxoglutarate dehydrogenase E1 component.